Consider the following 199-residue polypeptide: Outer-membrane lipoprotein LolB (199 aa).

The signal sequence occupies residues 1–28 (MSACPAPRSPFRWLHAFTLCLLLAVLAG). Cys-29 carries N-palmitoyl cysteine lipidation. Residue Cys-29 is the site of S-diacylglycerol cysteine attachment.

Belongs to the LolB family. Monomer.

The protein localises to the cell outer membrane. Plays a critical role in the incorporation of lipoproteins in the outer membrane after they are released by the LolA protein. This chain is Outer-membrane lipoprotein LolB, found in Bordetella bronchiseptica (strain ATCC BAA-588 / NCTC 13252 / RB50) (Alcaligenes bronchisepticus).